The sequence spans 297 residues: Homoserine kinase (297 aa).

79 to 89 is a binding site for ATP; that stretch reads PIARGLGSSGA.

The protein belongs to the GHMP kinase family. Homoserine kinase subfamily.

The protein localises to the cytoplasm. It catalyses the reaction L-homoserine + ATP = O-phospho-L-homoserine + ADP + H(+). The protein operates within amino-acid biosynthesis; L-threonine biosynthesis; L-threonine from L-aspartate: step 4/5. Its function is as follows. Catalyzes the ATP-dependent phosphorylation of L-homoserine to L-homoserine phosphate. This Pyrobaculum aerophilum (strain ATCC 51768 / DSM 7523 / JCM 9630 / CIP 104966 / NBRC 100827 / IM2) protein is Homoserine kinase.